Here is a 118-residue protein sequence, read N- to C-terminus: MCDKEFMWALKNGDLDEVKDYVAKGEDVNRTLEGGRKPLHYAADCGQLEILEFLLLKGADINAPDKHHITPLLSAVYEGHVSCVKLLLSKGADKTVKGPDGLTAFEATDNQAIKALLQ.

N-acetylcysteine is present on Cys-2. Residues 2 to 30 (CDKEFMWALKNGDLDEVKDYVAKGEDVNR) form an ANK 1 repeat. 3 positions are modified to N6-acetyllysine: Lys-4, Lys-11, and Lys-24. The residue at position 31 (Thr-31) is a Phosphothreonine. 2 ANK repeats span residues 34 to 66 (GGRK…APDK) and 67 to 99 (HHIT…VKGP).

It belongs to the myotrophin family. As to quaternary structure, interacts with RELA. Interacts with the heterodimer formed by CAPZA1 and CAPZB.

Its subcellular location is the cytoplasm. It localises to the nucleus. The protein resides in the perinuclear region. In terms of biological role, promotes dimerization of NF-kappa-B subunits and regulates NF-kappa-B transcription factor activity. Promotes growth of cardiomyocytes, but not cardiomyocyte proliferation. Promotes cardiac muscle hypertrophy. Plays a role in the regulation of the growth of actin filaments. Inhibits the activity of the F-actin-capping protein complex formed by the CAPZA1 and CAPZB heterodimer. The sequence is that of Myotrophin (MTPN) from Bos taurus (Bovine).